A 319-amino-acid polypeptide reads, in one-letter code: Cytochrome c biogenesis protein CcsA (319 aa).

Helical transmembrane passes span 11-31, 34-54, 71-91, 97-117, 142-162, 227-247, 254-274, and 288-308; these read VNFAFGGLLTAMLVYWSSLAF, ISGLNKLAALITLLVNIALAL, LYESLLFLAWGLTFVHLFIES, LIGAVSIPVAMFVTAFASLAL, IMMISYSILILGSLLSILFLI, IIGLGFPLLTIGIVAGAVWAN, WSWDPKETWALITWLIFAAYL, and AILASVGFLVVWICYLGVNFL.

Belongs to the CcmF/CycK/Ccl1/NrfE/CcsA family. In terms of assembly, may interact with Ccs1.

Its subcellular location is the plastid. The protein localises to the chloroplast thylakoid membrane. Functionally, required during biogenesis of c-type cytochromes (cytochrome c6 and cytochrome f) at the step of heme attachment. This chain is Cytochrome c biogenesis protein CcsA, found in Porphyra purpurea (Red seaweed).